The following is a 160-amino-acid chain: Nucleotide-binding protein Bpet3698 (160 aa).

Belongs to the YajQ family.

Nucleotide-binding protein. This chain is Nucleotide-binding protein Bpet3698, found in Bordetella petrii (strain ATCC BAA-461 / DSM 12804 / CCUG 43448).